Here is a 259-residue protein sequence, read N- to C-terminus: Zinc import ATP-binding protein ZnuC (259 aa).

Positions Val-22–His-238 constitute an ABC transporter domain. Gly-54–Ser-61 contacts ATP.

The protein belongs to the ABC transporter superfamily. Zinc importer (TC 3.A.1.15.5) family. The complex is composed of two ATP-binding proteins (ZnuC), two transmembrane proteins (ZnuB) and a solute-binding protein (ZnuA).

The protein resides in the cell inner membrane. The enzyme catalyses Zn(2+)(out) + ATP(in) + H2O(in) = Zn(2+)(in) + ADP(in) + phosphate(in) + H(+)(in). Functionally, part of the ABC transporter complex ZnuABC involved in zinc import. Responsible for energy coupling to the transport system. This chain is Zinc import ATP-binding protein ZnuC, found in Alkalilimnicola ehrlichii (strain ATCC BAA-1101 / DSM 17681 / MLHE-1).